A 375-amino-acid chain; its full sequence is 23S rRNA (uracil(747)-C(5))-methyltransferase RlmC (375 aa).

Residues cysteine 3, cysteine 11, cysteine 14, and cysteine 87 each contribute to the [4Fe-4S] cluster site. 4 residues coordinate S-adenosyl-L-methionine: glutamine 212, phenylalanine 241, glutamate 262, and asparagine 307. The active-site Nucleophile is the cysteine 334.

This sequence belongs to the class I-like SAM-binding methyltransferase superfamily. RNA M5U methyltransferase family. RlmC subfamily.

It catalyses the reaction uridine(747) in 23S rRNA + S-adenosyl-L-methionine = 5-methyluridine(747) in 23S rRNA + S-adenosyl-L-homocysteine + H(+). Its function is as follows. Catalyzes the formation of 5-methyl-uridine at position 747 (m5U747) in 23S rRNA. The protein is 23S rRNA (uracil(747)-C(5))-methyltransferase RlmC of Escherichia coli (strain SE11).